A 582-amino-acid polypeptide reads, in one-letter code: Trans-activating transcriptional regulatory protein (582 aa).

Residues 101 to 131 (QPVVEQPSPSSAYHAESFEHSAGVNQPSATG) form a disordered region.

It belongs to the nucleopolyhedrovirus IE-1 protein family. Homodimer. Interacts with helicase and LEF-3. Post-translationally, phosphorylated.

It localises to the host nucleus. Functionally, regulatory transcriptional protein, which trans-activates gene expression from early baculovirus promoters. Can also trans-activate its own promoter, suggesting an autoregulation during infection of host cells. Also promotes viral DNA genome replication via the N-terminal region. The polypeptide is Trans-activating transcriptional regulatory protein (IE1) (Autographa californica nuclear polyhedrosis virus (AcMNPV)).